We begin with the raw amino-acid sequence, 565 residues long: Proline--tRNA ligase (565 aa).

It belongs to the class-II aminoacyl-tRNA synthetase family. ProS type 1 subfamily. Homodimer.

The protein resides in the cytoplasm. It carries out the reaction tRNA(Pro) + L-proline + ATP = L-prolyl-tRNA(Pro) + AMP + diphosphate. Its function is as follows. Catalyzes the attachment of proline to tRNA(Pro) in a two-step reaction: proline is first activated by ATP to form Pro-AMP and then transferred to the acceptor end of tRNA(Pro). As ProRS can inadvertently accommodate and process non-cognate amino acids such as alanine and cysteine, to avoid such errors it has two additional distinct editing activities against alanine. One activity is designated as 'pretransfer' editing and involves the tRNA(Pro)-independent hydrolysis of activated Ala-AMP. The other activity is designated 'posttransfer' editing and involves deacylation of mischarged Ala-tRNA(Pro). The misacylated Cys-tRNA(Pro) is not edited by ProRS. The protein is Proline--tRNA ligase of Bacillus pumilus (strain SAFR-032).